A 663-amino-acid chain; its full sequence is UvrABC system protein B (663 aa).

A Helicase ATP-binding domain is found at 30–414 (EGIKAGKRHQ…IEHTDKMVEQ (385 aa)). 43–50 (GATGTGKT) is an ATP binding site. Residues 96–119 (YYDYYQPEAYVPSTDTFIEKDASI) carry the Beta-hairpin motif. Residues 434-600 (QIDDLLSEIQ…TINKKIHDLI (167 aa)) form the Helicase C-terminal domain. The UVR domain maps to 627–662 (QKTIDNIEKEMKQAAKDLDFEKATELRDMLFELKAE).

The protein belongs to the UvrB family. Forms a heterotetramer with UvrA during the search for lesions. Interacts with UvrC in an incision complex.

Its subcellular location is the cytoplasm. In terms of biological role, the UvrABC repair system catalyzes the recognition and processing of DNA lesions. A damage recognition complex composed of 2 UvrA and 2 UvrB subunits scans DNA for abnormalities. Upon binding of the UvrA(2)B(2) complex to a putative damaged site, the DNA wraps around one UvrB monomer. DNA wrap is dependent on ATP binding by UvrB and probably causes local melting of the DNA helix, facilitating insertion of UvrB beta-hairpin between the DNA strands. Then UvrB probes one DNA strand for the presence of a lesion. If a lesion is found the UvrA subunits dissociate and the UvrB-DNA preincision complex is formed. This complex is subsequently bound by UvrC and the second UvrB is released. If no lesion is found, the DNA wraps around the other UvrB subunit that will check the other stand for damage. The chain is UvrABC system protein B from Staphylococcus aureus (strain MSSA476).